We begin with the raw amino-acid sequence, 517 residues long: Golgi-associated kinase 1B (517 aa).

The Cytoplasmic portion of the chain corresponds to 1-36; the sequence is MTCPDKPGQLVNWFVCSLCAPRVCKLWSSRRPRTRR. Residues 37 to 56 traverse the membrane as a helical; Signal-anchor for type II membrane protein segment; that stretch reads NLLLGTACAIYLGFLVSQVG. The Extracellular portion of the chain corresponds to 57 to 517; it reads RGSFQHGQAT…HGARVLPMNE (461 aa). Asn-98 and Asn-287 each carry an N-linked (GlcNAc...) asparagine glycan.

This sequence belongs to the GASK family.

It localises to the golgi apparatus membrane. This chain is Golgi-associated kinase 1B, found in Mus musculus (Mouse).